Reading from the N-terminus, the 640-residue chain is Threonine--tRNA ligase (640 aa).

Positions 1–61 (MPTITLPDGS…DSDATLQIIT (61 aa)) constitute a TGS domain. The segment at 242–533 (DHRKIGKRLG…LIEHYEGAFP (292 aa)) is catalytic. Zn(2+) is bound by residues Cys-333, His-384, and His-510.

The protein belongs to the class-II aminoacyl-tRNA synthetase family. As to quaternary structure, homodimer. The cofactor is Zn(2+).

The protein resides in the cytoplasm. It catalyses the reaction tRNA(Thr) + L-threonine + ATP = L-threonyl-tRNA(Thr) + AMP + diphosphate + H(+). Its function is as follows. Catalyzes the attachment of threonine to tRNA(Thr) in a two-step reaction: L-threonine is first activated by ATP to form Thr-AMP and then transferred to the acceptor end of tRNA(Thr). Also edits incorrectly charged L-seryl-tRNA(Thr). The sequence is that of Threonine--tRNA ligase from Pseudomonas fluorescens (strain Pf0-1).